We begin with the raw amino-acid sequence, 569 residues long: MMTKAFFNKLPFEVFRRYVRTGKSIPQRSPRTRKSLLVGGTIASAVVLYNFNDTFHDSVKHTALTTKRIAVVTQATTRCFYHYKRALNKSYENKKEREVALNKCHKMCALITLHALRSNGGIYIKLGQHIGAMTYLLPKEWTDTMIPLQDHCPESTYEEIDELFKEDLGTSIEDMFLEFNKTPIGVASLAQVHVAKLKNSDGKGSSVAVKCQHPSLKEFIPLDVMLTRTVFELLDVFFPDYPLTWLGDELQSSIYVELNFTKEAENAEKTRHYFSKFKKQTALKIPKVIESHKRILIMEYVGGKRLDDLEYIDSHGISRSEVSSCLSHIFNNMIFTPNVGIHCDPHGGNLAIRSVKPAKDNGYHNFEIVLFDHGLYRYPSTRTRRLYAKFWLSLLFDKDQTKMKKYAKGFANITDEQFPLLAAAITGRSIDAALNYDISTSRTQEEMDVMANGILEGTLLSDLMSILSRIPRVVLLILKTNDLTRHLDECLQNPLGPERTFLIMTQYCAKTVYDEKVERINSEYARWSIKWMWENLTNWIVYERRINQLYFYDFVLWWKKFIPKTWLSS.

The N-terminal 18 residues, 1–18, are a transit peptide targeting the mitochondrion; sequence MMTKAFFNKLPFEVFRRY. Residues 19-34 are Mitochondrial matrix-facing; the sequence is VRTGKSIPQRSPRTRK. The helical transmembrane segment at 35-51 threads the bilayer; it reads SLLVGGTIASAVVLYNF. The Mitochondrial intermembrane portion of the chain corresponds to 52–569; it reads NDTFHDSVKH…KFIPKTWLSS (518 aa).

This sequence belongs to the protein kinase superfamily. ADCK protein kinase family.

The protein localises to the mitochondrion. The protein resides in the mitochondrion inner membrane. In terms of biological role, component of MIOREX complexes, large expressome-like assemblies of ribosomes with factors involved in all the steps of post-transcriptional gene expression. Involved in mitochondrial lipid homeostasis. The chain is ABC1 family protein MCP2 from Saccharomyces cerevisiae (strain ATCC 204508 / S288c) (Baker's yeast).